Consider the following 477-residue polypeptide: Ribulose bisphosphate carboxylase large chain (477 aa).

The propeptide occupies 1-2 (MS). Residue P3 is modified to N-acetylproline. K14 is modified (N6,N6,N6-trimethyllysine). 2 residues coordinate substrate: N123 and T173. The active-site Proton acceptor is the K175. A substrate-binding site is contributed by K177. Mg(2+)-binding residues include K201, D203, and E204. K201 carries the N6-carboxylysine modification. Residue H294 is the Proton acceptor of the active site. R295, H327, and S379 together coordinate substrate.

The protein belongs to the RuBisCO large chain family. Type I subfamily. Heterohexadecamer of 8 large chains and 8 small chains; disulfide-linked. The disulfide link is formed within the large subunit homodimers. It depends on Mg(2+) as a cofactor. In terms of processing, the disulfide bond which can form in the large chain dimeric partners within the hexadecamer appears to be associated with oxidative stress and protein turnover.

Its subcellular location is the plastid. It localises to the chloroplast. It catalyses the reaction 2 (2R)-3-phosphoglycerate + 2 H(+) = D-ribulose 1,5-bisphosphate + CO2 + H2O. The enzyme catalyses D-ribulose 1,5-bisphosphate + O2 = 2-phosphoglycolate + (2R)-3-phosphoglycerate + 2 H(+). RuBisCO catalyzes two reactions: the carboxylation of D-ribulose 1,5-bisphosphate, the primary event in carbon dioxide fixation, as well as the oxidative fragmentation of the pentose substrate in the photorespiration process. Both reactions occur simultaneously and in competition at the same active site. The protein is Ribulose bisphosphate carboxylase large chain of Solanum bulbocastanum (Wild potato).